The chain runs to 273 residues: Homeobox protein HMX2 (273 aa).

Residues 1-152 are disordered; the sequence is MGSKEDAGKG…RQAGAAKKKT (152 aa). Positions 93 to 102 are enriched in gly residues; the sequence is KGSGGSGPGG. Residues 114–123 show a composition bias toward basic and acidic residues; it reads SDFKEEKERL. A DNA-binding region (homeobox) is located at residues 149 to 208; the sequence is KKKTRTVFSRSQVYQLESTFDMKRYLSSSERACLASSLQLTETQVKTWFQNRRNKWKRQL.

Belongs to the HMX homeobox family.

It localises to the nucleus. Its function is as follows. Transcription factor involved in specification of neuronal cell types and which is required for inner ear and hypothalamus development. The chain is Homeobox protein HMX2 (HMX2) from Homo sapiens (Human).